The following is a 1091-amino-acid chain: Protein CTR9 homolog (1091 aa).

At A2 the chain carries N-acetylalanine. TPR repeat units follow at residues 90–127 (GAYY…DMHE), 128–161 (PSTW…APDN), 163–195 (PALL…FPGC), 197–230 (AAVR…DPDN), 232–267 (EALV…YPYC), 305–338 (SHSF…TNNN), 343–376 (VFPY…YPDN), 377–410 (CETL…DPRD), 412–443 (QAFV…MKKG), 449–482 (IEVL…GIWI), 558–591 (IDAY…DDKN), 593–625 (NALS…TDGK), 640–673 (AAMR…HNSN), 674–707 (MYAA…ASGS), 713–746 (PDVW…FFYN), and 749–782 (SQIL…TPSN). The interval 919–1091 (FQRIKEQWKS…EEEEEEEEAN (173 aa)) is disordered. The span at 951–965 (ERRRKKGGKRRKKDK) shows a compositional bias: basic residues. Acidic residues-rich tracts occupy residues 974–993 (DDEE…DEDA), 1003–1016 (MTTQ…DDDA), 1026–1035 (EDPDVDDDEV), and 1080–1091 (NMEEEEEEEEAN).

As to quaternary structure, component of the nuclear PAF1 complex (PAF1C), which consists of VIP2/ELF7/PAF1, VIP3/SKI8/WDR61, VIP4/LEO1, VIP5/RTF1, VIP6/ELF8/CTR9 and CDC73. Interacts with VIP3 and VIP4. Expressed in roots, leaves and shoot apex.

It is found in the nucleus. In terms of biological role, component of the PAF1 complex (PAF1C) which is involved in histone modifications such as methylation on histone H3 'Lys-4' (H3K4me3). Involved in regulation of flowering time. Required for the expression of the MADS box genes and flowering repressors FLC, AGL27/FLM and AGL31/MAF2. Required for histone H3 trimethylation on 'Lys-4' H3K4me3 at the FLC and AGL27/FLM loci. Involved in the control of seed dormancy and germination. The sequence is that of Protein CTR9 homolog from Arabidopsis thaliana (Mouse-ear cress).